The primary structure comprises 131 residues: uncharacterized protein (131 aa).

This is an uncharacterized protein from Bacillus subtilis (strain 168).